Here is a 571-residue protein sequence, read N- to C-terminus: Proline--tRNA ligase (571 aa).

This sequence belongs to the class-II aminoacyl-tRNA synthetase family. ProS type 1 subfamily. In terms of assembly, homodimer.

The protein resides in the cytoplasm. The enzyme catalyses tRNA(Pro) + L-proline + ATP = L-prolyl-tRNA(Pro) + AMP + diphosphate. Its function is as follows. Catalyzes the attachment of proline to tRNA(Pro) in a two-step reaction: proline is first activated by ATP to form Pro-AMP and then transferred to the acceptor end of tRNA(Pro). As ProRS can inadvertently accommodate and process non-cognate amino acids such as alanine and cysteine, to avoid such errors it has two additional distinct editing activities against alanine. One activity is designated as 'pretransfer' editing and involves the tRNA(Pro)-independent hydrolysis of activated Ala-AMP. The other activity is designated 'posttransfer' editing and involves deacylation of mischarged Ala-tRNA(Pro). The misacylated Cys-tRNA(Pro) is not edited by ProRS. This Thermodesulfovibrio yellowstonii (strain ATCC 51303 / DSM 11347 / YP87) protein is Proline--tRNA ligase.